A 244-amino-acid chain; its full sequence is Putative ribosomal recycling factor, mitochondrial (244 aa).

Belongs to the RRF family.

It is found in the mitochondrion. Necessary for protein synthesis in mitochondria. Functions as a ribosome recycling factor in mitochondria. This chain is Putative ribosomal recycling factor, mitochondrial (rrf1), found in Schizosaccharomyces pombe (strain 972 / ATCC 24843) (Fission yeast).